The following is a 387-amino-acid chain: 1-deoxy-D-xylulose 5-phosphate reductoisomerase (387 aa).

NADPH-binding residues include Thr-10, Gly-11, Ser-12, Ile-13, Gly-36, Arg-37, and Asn-124. A 1-deoxy-D-xylulose 5-phosphate-binding site is contributed by Lys-125. Glu-126 lines the NADPH pocket. Asp-150 lines the Mn(2+) pocket. Residues Ser-151, Glu-152, Ser-176, and His-199 each coordinate 1-deoxy-D-xylulose 5-phosphate. Glu-152 lines the Mn(2+) pocket. Gly-205 contacts NADPH. Positions 212, 217, 218, and 221 each coordinate 1-deoxy-D-xylulose 5-phosphate. Glu-221 contributes to the Mn(2+) binding site.

This sequence belongs to the DXR family. Mg(2+) is required as a cofactor. It depends on Mn(2+) as a cofactor.

It carries out the reaction 2-C-methyl-D-erythritol 4-phosphate + NADP(+) = 1-deoxy-D-xylulose 5-phosphate + NADPH + H(+). It participates in isoprenoid biosynthesis; isopentenyl diphosphate biosynthesis via DXP pathway; isopentenyl diphosphate from 1-deoxy-D-xylulose 5-phosphate: step 1/6. In terms of biological role, catalyzes the NADPH-dependent rearrangement and reduction of 1-deoxy-D-xylulose-5-phosphate (DXP) to 2-C-methyl-D-erythritol 4-phosphate (MEP). The sequence is that of 1-deoxy-D-xylulose 5-phosphate reductoisomerase from Cyanothece sp. (strain PCC 7425 / ATCC 29141).